Consider the following 711-residue polypeptide: Zinc finger CCCH domain-containing protein 43 (711 aa).

Residues 1-49 form a disordered region; it reads MPQDDDWFWGRPTPVVVGDGETTSKPKPPVAGKTKKVEEQHPRRPGEPD. The segment covering 35-47 has biased composition (basic and acidic residues); sequence KKVEEQHPRRPGE. C3H1-type zinc fingers lie at residues 44-72, 90-118, and 157-185; these read RPGE…HPDP, RPGE…HPPR, and RPGT…HPDP. The 254-residue stretch at 384 to 637 folds into the MIF4G domain; that stretch reads LKTLKSILNT…GAISYLIEKE (254 aa).

This Oryza sativa subsp. japonica (Rice) protein is Zinc finger CCCH domain-containing protein 43.